Reading from the N-terminus, the 180-residue chain is ATP synthase subunit delta (180 aa).

This sequence belongs to the ATPase delta chain family. F-type ATPases have 2 components, F(1) - the catalytic core - and F(0) - the membrane proton channel. F(1) has five subunits: alpha(3), beta(3), gamma(1), delta(1), epsilon(1). F(0) has three main subunits: a(1), b(2) and c(10-14). The alpha and beta chains form an alternating ring which encloses part of the gamma chain. F(1) is attached to F(0) by a central stalk formed by the gamma and epsilon chains, while a peripheral stalk is formed by the delta and b chains.

Its subcellular location is the cell inner membrane. F(1)F(0) ATP synthase produces ATP from ADP in the presence of a proton or sodium gradient. F-type ATPases consist of two structural domains, F(1) containing the extramembraneous catalytic core and F(0) containing the membrane proton channel, linked together by a central stalk and a peripheral stalk. During catalysis, ATP synthesis in the catalytic domain of F(1) is coupled via a rotary mechanism of the central stalk subunits to proton translocation. Functionally, this protein is part of the stalk that links CF(0) to CF(1). It either transmits conformational changes from CF(0) to CF(1) or is implicated in proton conduction. The chain is ATP synthase subunit delta from Parabacteroides distasonis (strain ATCC 8503 / DSM 20701 / CIP 104284 / JCM 5825 / NCTC 11152).